Reading from the N-terminus, the 390-residue chain is Monomeric sarcosine oxidase (390 aa).

6–36 is a binding site for FAD; it reads DVIVVGAGSMGMAAGYQLAKQGVKTLLVDAF. C316 carries the S-8alpha-FAD cysteine modification.

In terms of assembly, monomer. The cofactor is FAD.

It localises to the cytoplasm. The enzyme catalyses sarcosine + O2 + H2O = formaldehyde + glycine + H2O2. With respect to regulation, pyrrole-2-carboxylate is a competitive inhibitor. N-(cyclopropyl)glycine (CPG) is a mechanism-based inhibitor and inactivates the enzyme by covalently modifying the flavin. Catalyzes the oxidative demethylation of sarcosine. Can also oxidize other secondary amino acids such as N-methyl-L-alanine. The polypeptide is Monomeric sarcosine oxidase (soxA) (Bacillus sp. (strain B-0618)).